We begin with the raw amino-acid sequence, 414 residues long: 25-hydroxycholesterol 7-alpha-hydroxylase (414 aa).

A heme-binding site is contributed by cysteine 354.

The protein belongs to the cytochrome P450 family. The cofactor is heme. Highly expressed in brain; also expressed in liver and kidney.

It is found in the endoplasmic reticulum membrane. The protein resides in the microsome membrane. The enzyme catalyses 25-hydroxycholesterol + reduced [NADPH--hemoprotein reductase] + O2 = 7alpha,25-dihydroxycholesterol + oxidized [NADPH--hemoprotein reductase] + H2O + H(+). It catalyses the reaction (25R)-cholest-5-ene-3beta,26-diol + reduced [NADPH--hemoprotein reductase] + O2 = (25R)-cholest-5-en-3beta,7alpha,26-triol + oxidized [NADPH--hemoprotein reductase] + H2O + H(+). It functions in the pathway lipid metabolism; bile acid biosynthesis. Oxysterol 7alpha-hydroxylase that mediates formation of 7-alpha,25-dihydroxycholesterol (7-alpha,25-OHC) from 25-hydroxycholesterol. Plays a key role in cell positioning and movement in lymphoid tissues: 7-alpha,25-dihydroxycholesterol (7-alpha,25-OHC) acts as a ligand for the G protein-coupled receptor GPR183/EBI2, a chemotactic receptor for a number of lymphoid cells. This is 25-hydroxycholesterol 7-alpha-hydroxylase (Cyp7b1) from Rattus norvegicus (Rat).